The chain runs to 213 residues: Flagellin A1 (213 aa).

Positions 1–10 are excised as a propeptide; the sequence is MFENINEDRG. 3 N-linked (GlcNAc...) asparagine glycosylation sites follow: Asn-70, Asn-115, and Asn-172.

It belongs to the archaeal flagellin family. Glycosylated by a pentasaccharide similar to the S-layer glycoprotein, probably comprising a hexose, 2 hexuronic acids, a methyl ester of a hexuronic acid and mannose. Glycosylation is required for biosynthesis of stable flagella.

Its subcellular location is the archaeal flagellum. Its function is as follows. Major flagellin required for motility. Not involved in PibD-dependent surface adhesion. Much more abundant in cells compared to FlgA2. This is Flagellin A1 (flgA1) from Haloferax volcanii (strain ATCC 29605 / DSM 3757 / JCM 8879 / NBRC 14742 / NCIMB 2012 / VKM B-1768 / DS2) (Halobacterium volcanii).